Here is a 77-residue protein sequence, read N- to C-terminus: MARVCQVTGKAPMSGNNVSHANNKTKRRFLPNLQSRRIWVESENRFVRLRISNAGLRLIDKNGIDSVLADLRARGEA.

Residues 1–25 (MARVCQVTGKAPMSGNNVSHANNKT) form a disordered region.

This sequence belongs to the bacterial ribosomal protein bL28 family.

This chain is Large ribosomal subunit protein bL28, found in Paraburkholderia phytofirmans (strain DSM 17436 / LMG 22146 / PsJN) (Burkholderia phytofirmans).